We begin with the raw amino-acid sequence, 211 residues long: LexA repressor (211 aa).

Residues 31–51 (RAEISKELGFRSPNAAEEHLK) constitute a DNA-binding region (H-T-H motif). Residues Ser-127 and Lys-164 each act as for autocatalytic cleavage activity in the active site.

Belongs to the peptidase S24 family. As to quaternary structure, homodimer.

It carries out the reaction Hydrolysis of Ala-|-Gly bond in repressor LexA.. Represses a number of genes involved in the response to DNA damage (SOS response), including recA and lexA. In the presence of single-stranded DNA, RecA interacts with LexA causing an autocatalytic cleavage which disrupts the DNA-binding part of LexA, leading to derepression of the SOS regulon and eventually DNA repair. The polypeptide is LexA repressor (Pasteurella multocida (strain Pm70)).